We begin with the raw amino-acid sequence, 37 residues long: Brevinin-2DYe (37 aa).

Cys31 and Cys37 form a disulfide bridge.

In terms of tissue distribution, expressed by the skin glands.

The protein localises to the secreted. Antimicrobial peptide. Active against the Gram-positive bacterium S.aureus (MIC=15 uM) and the Gram-negative bacterium E.coli (MIC=30 uM). In Rana dybowskii (Dybovsky's frog), this protein is Brevinin-2DYe.